Reading from the N-terminus, the 318-residue chain is MAEWVFKQGALSLAEMTNLPAGFRKRLAGEAVVGRLEVLDSRVSAAGDTVKYLLGLDDGHAVETVLMRHDYGRTVCVSSQVGCRMACRFCASALGGWIRNLRSGELYEQVLAVRRASGEPVTHVVLMGMGEPLDNYENTLKFVANVTAPYGLRLSQRRITLSTCGLVPEIQKLARERLALTLAISLHAPNNALRDTLVPVNRKYPLEQLIPACAEYARRTGRRVSFEYILLGGVNDSPELARELSDLLTGLLGHVNLIPANPVPESGYRAPSPEAVRTFRRVLEEGGVPVSLRRELGADIGAACGQLRRRHRTKAVEE.

Catalysis depends on Glu-63, which acts as the Proton acceptor. In terms of domain architecture, Radical SAM core spans 69 to 299; it reads HDYGRTVCVS…VSLRRELGAD (231 aa). The cysteines at positions 76 and 304 are disulfide-linked. Positions 83, 87, and 90 each coordinate [4Fe-4S] cluster. S-adenosyl-L-methionine contacts are provided by residues 130-131, Ser-162, 185-187, and Asn-261; these read GE and SLH. Cys-304 serves as the catalytic S-methylcysteine intermediate.

It belongs to the radical SAM superfamily. RlmN family. [4Fe-4S] cluster serves as cofactor.

The protein localises to the cytoplasm. It carries out the reaction adenosine(2503) in 23S rRNA + 2 reduced [2Fe-2S]-[ferredoxin] + 2 S-adenosyl-L-methionine = 2-methyladenosine(2503) in 23S rRNA + 5'-deoxyadenosine + L-methionine + 2 oxidized [2Fe-2S]-[ferredoxin] + S-adenosyl-L-homocysteine. The catalysed reaction is adenosine(37) in tRNA + 2 reduced [2Fe-2S]-[ferredoxin] + 2 S-adenosyl-L-methionine = 2-methyladenosine(37) in tRNA + 5'-deoxyadenosine + L-methionine + 2 oxidized [2Fe-2S]-[ferredoxin] + S-adenosyl-L-homocysteine. Functionally, specifically methylates position 2 of adenine 2503 in 23S rRNA and position 2 of adenine 37 in tRNAs. The polypeptide is Probable dual-specificity RNA methyltransferase RlmN (Desulforudis audaxviator (strain MP104C)).